A 273-amino-acid polypeptide reads, in one-letter code: Formamidopyrimidine-DNA glycosylase (273 aa).

Catalysis depends on Pro2, which acts as the Schiff-base intermediate with DNA. Catalysis depends on Glu3, which acts as the Proton donor. The active-site Proton donor; for beta-elimination activity is Lys60. Positions 94, 113, and 154 each coordinate DNA. An FPG-type zinc finger spans residues 239 to 273; sequence EAYGRTGEPCRRCGTPIERIVVAQRSTHICPVCQA. Arg263 acts as the Proton donor; for delta-elimination activity in catalysis.

This sequence belongs to the FPG family. As to quaternary structure, monomer. Zn(2+) is required as a cofactor.

It carries out the reaction Hydrolysis of DNA containing ring-opened 7-methylguanine residues, releasing 2,6-diamino-4-hydroxy-5-(N-methyl)formamidopyrimidine.. It catalyses the reaction 2'-deoxyribonucleotide-(2'-deoxyribose 5'-phosphate)-2'-deoxyribonucleotide-DNA = a 3'-end 2'-deoxyribonucleotide-(2,3-dehydro-2,3-deoxyribose 5'-phosphate)-DNA + a 5'-end 5'-phospho-2'-deoxyribonucleoside-DNA + H(+). Involved in base excision repair of DNA damaged by oxidation or by mutagenic agents. Acts as a DNA glycosylase that recognizes and removes damaged bases. Has a preference for oxidized purines, such as 7,8-dihydro-8-oxoguanine (8-oxoG). Has AP (apurinic/apyrimidinic) lyase activity and introduces nicks in the DNA strand. Cleaves the DNA backbone by beta-delta elimination to generate a single-strand break at the site of the removed base with both 3'- and 5'-phosphates. This chain is Formamidopyrimidine-DNA glycosylase, found in Herpetosiphon aurantiacus (strain ATCC 23779 / DSM 785 / 114-95).